We begin with the raw amino-acid sequence, 230 residues long: Orotidine 5'-phosphate decarboxylase (230 aa).

Substrate-binding positions include Asp-8, Lys-30, 59-68 (DLKLYDIPNT), Thr-118, Arg-178, Gln-187, Gly-207, and Arg-208. Lys-61 acts as the Proton donor in catalysis.

This sequence belongs to the OMP decarboxylase family. Type 1 subfamily. As to quaternary structure, homodimer.

It catalyses the reaction orotidine 5'-phosphate + H(+) = UMP + CO2. It participates in pyrimidine metabolism; UMP biosynthesis via de novo pathway; UMP from orotate: step 2/2. Functionally, catalyzes the decarboxylation of orotidine 5'-monophosphate (OMP) to uridine 5'-monophosphate (UMP). This chain is Orotidine 5'-phosphate decarboxylase, found in Sulfurovum sp. (strain NBC37-1).